The chain runs to 954 residues: Regulatory protein FlaEY (954 aa).

Its function is as follows. Functions in trans to modulate the level of transcription of the flagellin genes and several genes encoding chemotaxis functions. It is itself temporally controlled. The chain is Regulatory protein FlaEY (flaEY) from Caulobacter vibrioides (strain ATCC 19089 / CIP 103742 / CB 15) (Caulobacter crescentus).